A 192-amino-acid polypeptide reads, in one-letter code: MSLSPHQKTAGWLVGVVVVMGAASFAAVPFYDWFCRVTGFGGTTAVASEAPAEVLDRTIRVRFDASREAGMPWEFRPLQREMEVRIGETGLAFYEAYNPTDRTVAGTASYNVTPDAAGGYFAKIACFCFTEQVLAPGERVEMPVSFYVDPAIVKDRDGRYVRQITLSYTFHQTELPEEQAALAARPAGIDVN.

The Cytoplasmic segment spans residues 1–9; it reads MSLSPHQKT. A helical; Signal-anchor for type II membrane protein membrane pass occupies residues 10 to 30; the sequence is AGWLVGVVVVMGAASFAAVPF. At 31–192 the chain is on the periplasmic side; it reads YDWFCRVTGF…AARPAGIDVN (162 aa).

The protein belongs to the COX11/CtaG family.

Its subcellular location is the cell inner membrane. Its function is as follows. Exerts its effect at some terminal stage of cytochrome c oxidase synthesis, probably by being involved in the insertion of the copper B into subunit I. The polypeptide is Cytochrome c oxidase assembly protein CtaG (Cereibacter sphaeroides (strain ATCC 17025 / ATH 2.4.3) (Rhodobacter sphaeroides)).